We begin with the raw amino-acid sequence, 717 residues long: Transport/processing ATP-binding protein ComA (717 aa).

Residues glutamine 11–methionine 138 enclose the Peptidase C39 domain. Cysteine 17 is a catalytic residue. The next 7 membrane-spanning stretches (helical) occupy residues glycine 18–leucine 38, glycine 166–serine 186, leucine 205–alanine 225, leucine 237–phenylalanine 257, serine 281–phenylalanine 301, asparagine 306–methionine 326, and valine 397–glycine 417. One can recognise an ABC transmembrane type-1 domain in the interval isoleucine 168–threonine 450. The ABC transporter domain occupies methionine 484–serine 717. Glycine 517–threonine 524 provides a ligand contact to ATP.

It belongs to the ABC transporter superfamily. HlyB family.

The protein resides in the cell membrane. Its function is as follows. Required for induction of competence. Seems to transport the competence-stimulating peptide (CSP). The sequence is that of Transport/processing ATP-binding protein ComA (comA) from Streptococcus pneumoniae (strain ATCC BAA-255 / R6).